The following is a 161-amino-acid chain: Regulator of ribonuclease activity A (161 aa).

The protein belongs to the RraA family. As to quaternary structure, homotrimer. Binds to both RNA-binding sites in the C-terminal region of Rne and to RhlB.

The protein localises to the cytoplasm. Functionally, globally modulates RNA abundance by binding to RNase E (Rne) and regulating its endonucleolytic activity. Can modulate Rne action in a substrate-dependent manner by altering the composition of the degradosome. Modulates RNA-binding and helicase activities of the degradosome. The chain is Regulator of ribonuclease activity A from Yersinia pseudotuberculosis serotype O:1b (strain IP 31758).